The primary structure comprises 308 residues: Ribosomal RNA small subunit methyltransferase H (308 aa).

S-adenosyl-L-methionine is bound by residues glycine 38 to histidine 40, aspartate 58, phenylalanine 82, aspartate 99, and glutamine 106.

Belongs to the methyltransferase superfamily. RsmH family.

It is found in the cytoplasm. It catalyses the reaction cytidine(1402) in 16S rRNA + S-adenosyl-L-methionine = N(4)-methylcytidine(1402) in 16S rRNA + S-adenosyl-L-homocysteine + H(+). Functionally, specifically methylates the N4 position of cytidine in position 1402 (C1402) of 16S rRNA. This is Ribosomal RNA small subunit methyltransferase H from Acidovorax ebreus (strain TPSY) (Diaphorobacter sp. (strain TPSY)).